The chain runs to 211 residues: LexA repressor (211 aa).

Residues 29–49 constitute a DNA-binding region (H-T-H motif); the sequence is VREICTAVGLRSTSTVHSHLN. Catalysis depends on for autocatalytic cleavage activity residues serine 131 and lysine 169.

The protein belongs to the peptidase S24 family. In terms of assembly, homodimer.

The enzyme catalyses Hydrolysis of Ala-|-Gly bond in repressor LexA.. Its function is as follows. Represses a number of genes involved in the response to DNA damage (SOS response), including recA and lexA. In the presence of single-stranded DNA, RecA interacts with LexA causing an autocatalytic cleavage which disrupts the DNA-binding part of LexA, leading to derepression of the SOS regulon and eventually DNA repair. This is LexA repressor from Clostridioides difficile (strain 630) (Peptoclostridium difficile).